Consider the following 574-residue polypeptide: Cytochrome P450 306a1 (574 aa).

Residues 303 to 314 (EKEQLRQSKEAD) are compositionally biased toward basic and acidic residues. The disordered stretch occupies residues 303–333 (EKEQLRQSKEADPSQEQSEADEDDEESDEED). The segment covering 320 to 333 (SEADEDDEESDEED) has biased composition (acidic residues). Heme is bound at residue C505.

Belongs to the cytochrome P450 family. The cofactor is heme. In terms of tissue distribution, first seen at the early (syncytial) blastoderm stage 4. During cellularization of the blastoderm (stage 5), stripes of expression appear and remain through to stage 10. Expression becomes undetectable during germ band retraction (stages 11-14). By stage 15, some expression resumes in the primordium of the ring gland, so that by stage 17 strong expression is seen, but only in the ring gland. This specific localization continues throughout the larval instars (at protein level). Expressed in the prothoracic gland cells of the larval ring gland (RG). Levels decline just after the molt to the third instar then increase later during the wandering stage. Low levels of expression are seen in the larval brain and fat body. In the adult, majority of expression is restricted to the ovaries, with low levels in the head and carcass of both sexes.

The protein resides in the endoplasmic reticulum membrane. The protein localises to the microsome membrane. It carries out the reaction 2,22,25-trideoxyecdysone + 2 reduced [adrenodoxin] + O2 + 2 H(+) = 2,22-dideoxyecdysone + 2 oxidized [adrenodoxin] + H2O. It functions in the pathway steroid biosynthesis; ecdysteroid biosynthesis. Functionally, involved in the metabolism of insect hormones; responsible for ecdysteroid C25-hydroxylase activity. May be involved in the breakdown of synthetic insecticides. The protein is Cytochrome P450 306a1 of Drosophila melanogaster (Fruit fly).